Reading from the N-terminus, the 73-residue chain is uncharacterized protein (73 aa).

The next 2 membrane-spanning stretches (helical) occupy residues 10-30 (ILLA…YVSA) and 42-62 (YSTV…IYLI).

It is found in the cell membrane. This is an uncharacterized protein from Archaeoglobus fulgidus (strain ATCC 49558 / DSM 4304 / JCM 9628 / NBRC 100126 / VC-16).